A 140-amino-acid polypeptide reads, in one-letter code: Histone H3-like centromeric protein A (140 aa).

A disordered region spans residues 1–46; the sequence is MGPRRRSRKPEAPRRRSPSPTPTPGPSRRGPSLGASSHQHSRRRQG. Gly2 bears the N,N,N-trimethylglycine mark. At Ser7 the chain carries Phosphoserine; by AURKA and AURKB. Residues Ser17, Ser19, and Ser27 each carry the phosphoserine modification. Residues 26 to 37 are compositionally biased toward low complexity; sequence PSRRGPSLGASS. The important for flexibility of DNA ends that protrude from nucleosomes stretch occupies residues 39–54; it reads QHSRRRQGWLKEIRKL. Ser68 is subject to Phosphoserine. The interval 75–116 is CATD; sequence CVKFTRGVDFNWQAQALLALQEAAEAFLVHLFEDAYLLTLHA.

Belongs to the histone H3 family. As to quaternary structure, component of centromeric nucleosomes, where DNA is wrapped around a histone octamer core. The octamer contains two molecules each of H2A, H2B, CENPA and H4 assembled in one CENPA-H4 heterotetramer and two H2A-H2B heterodimers. CENPA modulates the DNA-binding characteristics of nucleosomes so that protruding DNA ends have higher flexibility than in nucleosomes containing conventional histone H3. Inhibits binding of histone H1 to nucleosomes, since histone H1 binds preferentially to rigid DNA linkers that protrude from nucleosomes. Nucleosomes containing CENPA also contain histone H2A variants such as MACROH2A and H2A.Z/H2AZ1. The CENPA-H4 heterotetramer is more compact and structurally more rigid than corresponding H3-H4 heterotetramers. Can assemble into nucleosomes that contain both CENPA and histone H3.3; these nucleosomes interact with a single CENPC chain. Heterotrimer composed of HJURP, CENPA and histone H4, where HJURP interacts with the dimer formed by CENPA and histone H4 and prevents tetramerization of CENPA and H4. Component of the CENPA-NAC complex, at least composed of CENPA, CENPC, CENPH, CENPM, CENPN, CENPT and CENPU. Interacts (via CATD domain) with HJURP; the interaction is direct and is required for its localization to centromeres. Interacts with CENPC, CENPN and CENPT; interaction is direct. Part of a centromere complex consisting of CENPA, CENPT and CENPW. Identified in centromere complexes containing histones H2A, H2B and H4, and at least CENPA, CENPB, CENPC, CENPT, CENPN, HJURP, SUPT16H, SSRP1 and RSF1. Can self-associate. The CENPA-H4 heterotetramer can bind DNA by itself (in vitro). Interacts with CDK1, PPP1CA and RBBP7. (Microbial infection) Interacts directly with herpes virus HHV-1 protein ICP0. Post-translationally, ubiquitinated. Interaction with herpes virus HSV-1 ICP0 protein, leads to its degradation by the proteasome pathway. Trimethylated by NTMT1 at the N-terminal glycine after cleavage of Met-1. Methylation is low before incorporation into nucleosomes and increases with cell cycle progression, with the highest levels in mitotic nucleosomes. In terms of processing, phosphorylated by CDK1 at Ser-68 during early mitosis; this abolishes association with chromatin and centromeres, prevents interaction with HJURP and thereby prevents premature assembly of CENPA into centromeres. Dephosphorylated at Ser-68 by PPP1CA during late mitosis. Phosphorylation of Ser-7 by AURKA and AURKB during prophase is required for localization of AURKA and AURKB at inner centromere and is essential for normal cytokinesis. Initial phosphorylation during prophase is mediated by AURKA and is maintained by AURKB. Post-translationally, poly-ADP-ribosylated by PARP1.

The protein resides in the nucleus. It localises to the chromosome. The protein localises to the centromere. Histone H3-like nucleosomal protein that is specifically found in centromeric nucleosomes. Replaces conventional H3 in the nucleosome core of centromeric chromatin that serves as an assembly site for the inner kinetochore. The presence of CENPA subtly modifies the nucleosome structure and the way DNA is wrapped around the nucleosome and gives rise to protruding DNA ends that are less well-ordered and rigid compared to nucleosomes containing histone H3. May serve as an epigenetic mark that propagates centromere identity through replication and cell division. Required for recruitment and assembly of kinetochore proteins, and as a consequence required for progress through mitosis, chromosome segregation and cytokinesis. This is Histone H3-like centromeric protein A (CENPA) from Homo sapiens (Human).